Consider the following 346-residue polypeptide: dTDP-glucose 4,6-dehydratase (346 aa).

NAD(+)-binding positions include 17 to 18 (FI), 38 to 41 (DKLT), 64 to 65 (DI), 86 to 90 (LAAES), and threonine 105. Serine 90 serves as a coordination point for substrate. Threonine 139 serves as a coordination point for substrate. The active-site Proton donor is aspartate 140. Active-site proton acceptor residues include glutamate 141 and tyrosine 165. An NAD(+)-binding site is contributed by 165–169 (YSASK). Asparagine 194 contributes to the substrate binding site. Asparagine 195 is an NAD(+) binding site. Substrate-binding positions include 204 to 205 (KL), 220 to 222 (PVY), arginine 229, asparagine 264, and 298 to 302 (DRPGH).

The protein belongs to the NAD(P)-dependent epimerase/dehydratase family. dTDP-glucose dehydratase subfamily. Homodimer. NAD(+) is required as a cofactor.

The enzyme catalyses dTDP-alpha-D-glucose = dTDP-4-dehydro-6-deoxy-alpha-D-glucose + H2O. Its pathway is carbohydrate biosynthesis; dTDP-L-rhamnose biosynthesis. It participates in bacterial outer membrane biogenesis; LPS O-antigen biosynthesis. Functionally, catalyzes the dehydration of dTDP-D-glucose to form dTDP-6-deoxy-D-xylo-4-hexulose via a three-step process involving oxidation, dehydration and reduction. In Neisseria gonorrhoeae, this protein is dTDP-glucose 4,6-dehydratase.